A 122-amino-acid polypeptide reads, in one-letter code: Large ribosomal subunit protein uL14 (122 aa).

The protein belongs to the universal ribosomal protein uL14 family. Part of the 50S ribosomal subunit. Forms a cluster with proteins L3 and L19. In the 70S ribosome, L14 and L19 interact and together make contacts with the 16S rRNA in bridges B5 and B8.

Its function is as follows. Binds to 23S rRNA. Forms part of two intersubunit bridges in the 70S ribosome. The sequence is that of Large ribosomal subunit protein uL14 from Pelobacter propionicus (strain DSM 2379 / NBRC 103807 / OttBd1).